The primary structure comprises 528 residues: 3-ketoacyl-CoA synthase 2 (528 aa).

The next 2 helical transmembrane spans lie at leucine 36–leucine 56 and phenylalanine 78–phenylalanine 98. The FAE domain occupies tyrosine 97–valine 388. Active-site residues include cysteine 241, histidine 320, histidine 407, histidine 411, and asparagine 444.

The protein belongs to the thiolase-like superfamily. Chalcone/stilbene synthases family. Expressed in siliques, flowers and stems. In young seedlings, expressed in the central cylinder of primary roots, in emerging lateral roots and in their root cap, but not in aboveground tissues such as hypocotyls, cotyledons and leaves. Expressed in sepals in mature flowers and in the chalaza and micropyle region of developing seeds shortly prior to or just after the detachment from the funiculus. Expressed in roots, flowers, cauline leaves and siliques.

The protein localises to the membrane. The catalysed reaction is a very-long-chain acyl-CoA + malonyl-CoA + H(+) = a very-long-chain 3-oxoacyl-CoA + CO2 + CoA. The protein operates within lipid metabolism; fatty acid biosynthesis. Its activity is regulated as follows. Inhibited by K3 herbicides such as allidochlor, anilofos, cafenstrole and flufenacet. Strongly inhibited by metazachlor. Functionally, mediates the synthesis of VLCFAs from 22 to 26 carbons in length (e.g. C22, C24, C26). Involved in the elongation of C20 fatty acid suberin precursors. Functionally redundant with KCS20 in the two-carbon elongation of C22 fatty acids that is required for cuticular wax and root suberin biosynthesis. This is 3-ketoacyl-CoA synthase 2 from Arabidopsis thaliana (Mouse-ear cress).